The primary structure comprises 266 residues: Small ribosomal subunit protein uS2 (266 aa).

The protein belongs to the universal ribosomal protein uS2 family.

The polypeptide is Small ribosomal subunit protein uS2 (Bartonella tribocorum (strain CIP 105476 / IBS 506)).